The following is a 162-amino-acid chain: AQPTDQQMDARSFLSEEMIAEFKAAFDMFDTDGGGDISTKELGTVMRMLGQTPTKEELDAIIEEVDEDGSGTIDFEEFLVMMVRQMKEDAQGKSEEELAECFRIFDKNADGYIDSEELGEILRSSGESITDEEIEELMKDGDKNNDGKIDFDEFLKMMEGVQ.

Alanine 1 carries the post-translational modification N-acetylalanine. EF-hand domains follow at residues 17–52, 53–88, 93–128, and 129–162; these read EMIA…LGQT, PTKE…QMKE, KSEE…SGES, and ITDE…EGVQ. Ca(2+) contacts are provided by aspartate 30, aspartate 32, aspartate 36, glutamate 41, aspartate 66, aspartate 68, serine 70, threonine 72, glutamate 77, aspartate 106, asparagine 108, aspartate 110, tyrosine 112, glutamate 117, aspartate 142, asparagine 144, aspartate 146, lysine 148, and glutamate 153.

It belongs to the troponin C family.

In terms of biological role, troponin is the central regulatory protein of striated muscle contraction. Tn consists of three components: Tn-I which is the inhibitor of actomyosin ATPase, Tn-T which contains the binding site for tropomyosin and Tn-C. The binding of calcium to Tn-C abolishes the inhibitory action of Tn on actin filaments. In Pelophylax lessonae (Pool frog), this protein is Troponin C, skeletal muscle.